The chain runs to 827 residues: Villin-1 (827 aa).

The interval 1–126 (MTKLSAQVKG…IRKGGVASGM (126 aa)) is necessary for homodimerization. The interval 1 to 734 (MTKLSAQVKG…YEDLKAELGN (734 aa)) is core. Residues 27-76 (MQMVPVPSNSFGSFFDGDCYVIQAIHKTGSNLSYDIHYWIGQASSQDEQG) form a Gelsolin-like 1 repeat. LPA/PIP2-binding site stretches follow at residues 112 to 119 (KKGIVIRK) and 138 to 146 (RLLHVKGKR). Gelsolin-like repeat units lie at residues 148–188 (VVAG…MERL) and 265–309 (VVVR…QEKK). Residue Ser366 is modified to Phosphoserine. Gelsolin-like repeat units follow at residues 407-457 (NLEL…DEIT), 528-568 (TKAF…DERE), and 631-672 (FLAT…DEKK). Ser735 bears the Phosphoserine mark. Residues 735–827 (SGDWSQITAE…QNLKKEKGLF (93 aa)) are headpiece. In terms of domain architecture, HP spans 761 to 827 (SGPLPIFPLE…QNLKKEKGLF (67 aa)). Positions 816-824 (KQQNLKKEK) are LPA/PIP2-binding site 3.

The protein belongs to the villin/gelsolin family. In terms of assembly, monomer. Homodimer; homodimerization is necessary for actin-bundling. Associates with F-actin; phosphorylation at tyrosine residues decreases the association with F-actin. Interacts (phosphorylated at C-terminus tyrosine phosphorylation sites) with PLCG1 (via the SH2 domains). Interacts (phosphorylated form) with PLCG1; the interaction is enhanced by hepatocyte growth factor (HGF). Post-translationally, phosphorylated on tyrosine residues by SRC. The unphosphorylated form increases the initial rate of actin-nucleating activity, whereas the tyrosine-phosphorylated form inhibits actin-nucleating activity, enhances actin-bundling activity and enhances actin-severing activity by reducing high Ca(2+) requirements. The tyrosine-phosphorylated form does not regulate actin-capping activity. Tyrosine phosphorylation is essential for cell migration: tyrosine phosphorylation sites in the N-terminus half regulate actin reorganization and cell morphology, whereas tyrosine phosphorylation sites in the C-terminus half regulate cell migration via interaction with PLCG1. Tyrosine phosphorylation is induced by epidermal growth factor (EGF) and stimulates cell migration.

Its subcellular location is the cytoplasm. It is found in the cytoskeleton. The protein resides in the cell projection. The protein localises to the lamellipodium. It localises to the ruffle. Its subcellular location is the microvillus. It is found in the filopodium tip. The protein resides in the filopodium. Its function is as follows. Epithelial cell-specific Ca(2+)-regulated actin-modifying protein that modulates the reorganization of microvillar actin filaments. Plays a role in the actin nucleation, actin filament bundle assembly, actin filament capping and severing. Binds phosphatidylinositol 4,5-bisphosphate (PIP2) and lysophosphatidic acid (LPA); binds LPA with higher affinity than PIP2. Binding to LPA increases its phosphorylation by SRC and inhibits all actin-modifying activities. Binding to PIP2 inhibits actin-capping and -severing activities but enhances actin-bundling activity. Regulates the intestinal epithelial cell morphology, cell invasion, cell migration and apoptosis. Protects against apoptosis induced by dextran sodium sulfate (DSS) in the gastrointestinal epithelium. Appears to regulate cell death by maintaining mitochondrial integrity. Enhances hepatocyte growth factor (HGF)-induced epithelial cell motility, chemotaxis and wound repair. The polypeptide is Villin-1 (VIL1) (Bos taurus (Bovine)).